A 512-amino-acid chain; its full sequence is Maturase K (512 aa).

This sequence belongs to the intron maturase 2 family. MatK subfamily.

Its subcellular location is the plastid. The protein localises to the chloroplast. In terms of biological role, usually encoded in the trnK tRNA gene intron. Probably assists in splicing its own and other chloroplast group II introns. In Lilium regale (Regal lily), this protein is Maturase K.